A 467-amino-acid chain; its full sequence is Multiple inositol polyphosphate phosphatase 1 (467 aa).

Residues 1–15 form the signal peptide; that stretch reads MRLLILLLLPLVAIA. The active site involves His67. 3 N-linked (GlcNAc...) asparagine glycosylation sites follow: Asn120, Asn159, and Asn234. Gly441 carries GPI-anchor amidated glycine lipidation. A propeptide spans 442–467 (removed in mature form); it reads GAPSLGSGVGGLLATTLAAMLVYLMH.

The protein belongs to the histidine acid phosphatase family. MINPP1 subfamily. N-glycosylated.

The protein localises to the cell membrane. It localises to the apical cell membrane. The protein resides in the basolateral cell membrane. Its subcellular location is the cell projection. It is found in the filopodium. The protein localises to the cell junction. The enzyme catalyses (2R)-2,3-bisphosphoglycerate + H2O = (2R)-2-phosphoglycerate + phosphate. It carries out the reaction 1D-myo-inositol hexakisphosphate + H2O = 1D-myo-inositol 1,2,4,5,6-pentakisphosphate + phosphate. The catalysed reaction is 1D-myo-inositol 1,2,4,5,6-pentakisphosphate + H2O = 1D-myo-inositol 1,2,5,6-tetrakisphosphate + phosphate. It catalyses the reaction 1D-myo-inositol 1,2,5,6-tetrakisphosphate + H2O = 1D-myo-inositol 1,2,6-trisphosphate + phosphate. Probable multiple inositol polyphosphate phosphatase that hydrolyzes 1D-myo-inositol 1,3,4,5,6-pentakisphosphate (InsP5[2OH]) and 1D-myo-inositol hexakisphosphate (InsP6) to a range of less phosphorylated inositol phosphates. This regulates the availability of these various small molecule second messengers and metal chelators which control many aspects of cell physiology. May have a dual substrate specificity, and function as a 2,3-bisphosphoglycerate 3-phosphatase hydrolyzing 2,3-bisphosphoglycerate to 2-phosphoglycerate. 2,3-bisphosphoglycerate (BPG) is formed as part of the Rapoport-Luebering glycolytic bypass. Has a role in embryonic tracheal development where it localizes to the leading edge of actively migrating branches. In these leading cells, enhances formation and/or maintenance of filopodia which may drive branch migration and elongation by cell-cell intercalation. The function in tracheal morphogenesis is dependent on its inositol polyphosphate phosphatase activity. The polypeptide is Multiple inositol polyphosphate phosphatase 1 (Drosophila melanogaster (Fruit fly)).